Consider the following 220-residue polypeptide: 7-cyano-7-deazaguanine synthase 1 (220 aa).

10-20 (FSGGIDSTVLL) contributes to the ATP binding site. Positions 183, 191, 194, and 197 each coordinate Zn(2+).

This sequence belongs to the QueC family. As to quaternary structure, homodimer. Zn(2+) serves as cofactor.

It catalyses the reaction 7-carboxy-7-deazaguanine + NH4(+) + ATP = 7-cyano-7-deazaguanine + ADP + phosphate + H2O + H(+). The protein operates within purine metabolism; 7-cyano-7-deazaguanine biosynthesis. Catalyzes the ATP-dependent conversion of 7-carboxy-7-deazaguanine (CDG) to 7-cyano-7-deazaguanine (preQ(0)). The chain is 7-cyano-7-deazaguanine synthase 1 from Desulfitobacterium hafniense (strain Y51).